The following is a 139-amino-acid chain: GSK3B-interacting protein (139 aa).

Positions 1–22 (METDCNPMELSSMSGFEEGSEL) are disordered. The required for PRKAR2A interaction; contributes to a protective effect against H(2)O(2)-induced apoptosis stretch occupies residues 41-45 (VNDVL). The interval 115–139 (SPAYREAFGNALLQRLEALKRDGQS) is interaction with GSK3B and acts as a GSK3B inhibitor.

It belongs to the GSKIP family. As to quaternary structure, forms a complex composed of PRKAR2A or PRKAR2B, GSK3B and GSKIP through GSKIP interaction; facilitates PKA-induced phosphorylation of GSK3B leading to GSK3B inactivation; recruits DNM1L through GSK3B for PKA-mediated phosphorylation of DNM1L; promotes beta-catenin degradation through GSK3B-induced phosphorylation of beta-catenin; stabilizes beta-catenin and enhances Wnt-induced signaling through PKA-induced phosphorylation of beta-catenin. Interacts with GSK3B; induces GSK3B-mediated phosphorylation of GSKIP and inhibits GSK3B kinase activity. Post-translationally, phosphorylated by GSK3B. In terms of tissue distribution, detected in heart, brain, placenta, liver, skeletal muscle, kidney, testis, lung and pancreas.

It localises to the cytoplasm. It is found in the nucleus. Functionally, A-kinase anchoring protein for GSK3B and PKA that regulates or facilitates their kinase activity towards their targets. The ternary complex enhances Wnt-induced signaling by facilitating the GSK3B- and PKA-induced phosphorylation of beta-catenin leading to beta-catenin degradation and stabilization respectively. Upon cAMP activation, the ternary complex contributes to neuroprotection against oxidative stress-induced apoptosis by facilitating the PKA-induced phosphorylation of DML1 and PKA-induced inactivation of GSK3B. During neurite outgrowth promotes neuron proliferation; while increases beta-catenin-induced transcriptional activity through GSK3B kinase activity inhibition, reduces N-cadherin level to promote cell cycle progression. The polypeptide is GSK3B-interacting protein (Homo sapiens (Human)).